A 393-amino-acid chain; its full sequence is S-adenosylmethionine synthase (393 aa).

Residue H16 coordinates ATP. Residue D18 coordinates Mg(2+). E44 lines the K(+) pocket. 2 residues coordinate L-methionine: E57 and Q100. The interval 100 to 110 (QSNDIAQGVDH) is flexible loop. Residues 167-169 (DAK), 238-239 (RF), D247, 253-254 (RK), A270, and K274 contribute to the ATP site. Position 247 (D247) interacts with L-methionine. K278 contributes to the L-methionine binding site.

The protein belongs to the AdoMet synthase family. Homotetramer; dimer of dimers. Mg(2+) serves as cofactor. The cofactor is K(+).

The protein resides in the cytoplasm. It catalyses the reaction L-methionine + ATP + H2O = S-adenosyl-L-methionine + phosphate + diphosphate. It functions in the pathway amino-acid biosynthesis; S-adenosyl-L-methionine biosynthesis; S-adenosyl-L-methionine from L-methionine: step 1/1. In terms of biological role, catalyzes the formation of S-adenosylmethionine (AdoMet) from methionine and ATP. The overall synthetic reaction is composed of two sequential steps, AdoMet formation and the subsequent tripolyphosphate hydrolysis which occurs prior to release of AdoMet from the enzyme. This chain is S-adenosylmethionine synthase, found in Acidovorax sp. (strain JS42).